The chain runs to 1350 residues: ABC transporter C family member 13 (1350 aa).

In terms of domain architecture, ABC transmembrane type-1 1 spans 107–390 (NKKSIFIVIL…LPEAIHNLLG (284 aa)). Helical transmembrane passes span 111–131 (IFIV…LKYF), 143–163 (TFLT…SYTL), 215–235 (IGLF…FPIQ), and 240–260 (LALL…VMII). Residues 462–481 (EKSEEEYETTTTTTDDNNNN) are disordered. Low complexity predominate over residues 470-481 (TTTTTTDDNNNN). The ABC transporter 1 domain maps to 473-693 (TTTDDNNNNN…IDFESIMKTK (221 aa)). 505 to 512 (GVVGSGKT) provides a ligand contact to ATP. Residues 774-1061 (KHGSSTFFFI…FVELEVKMNS (288 aa)) form the ABC transmembrane type-1 2 domain. The next 6 membrane-spanning stretches (helical) occupy residues 776–796 (GSST…QAIF), 816–836 (DSFY…TLVI), 887–907 (IDLL…TVVF), 909–929 (ICVM…LIIV), 1003–1023 (IGVR…FFSL), and 1029–1049 (GFSV…NWAV). The 235-residue stretch at 1103–1337 (IEFRDVEIRY…KNSKFSKLVK (235 aa)) folds into the ABC transporter 2 domain. 1137–1144 (GRTGAGKS) contacts ATP.

Belongs to the ABC transporter superfamily. ABCC family. Conjugate transporter (TC 3.A.1.208) subfamily.

The protein localises to the membrane. The protein is ABC transporter C family member 13 (abcC13) of Dictyostelium discoideum (Social amoeba).